The chain runs to 153 residues: 6,7-dimethyl-8-ribityllumazine synthase (153 aa).

5-amino-6-(D-ribitylamino)uracil-binding positions include Phe-22, 56–58 (AFE), and 80–82 (TVI). A (2S)-2-hydroxy-3-oxobutyl phosphate-binding site is contributed by 85 to 86 (AT). The active-site Proton donor is His-88. Residue Phe-113 coordinates 5-amino-6-(D-ribitylamino)uracil. Residue Arg-127 coordinates (2S)-2-hydroxy-3-oxobutyl phosphate.

This sequence belongs to the DMRL synthase family.

The enzyme catalyses (2S)-2-hydroxy-3-oxobutyl phosphate + 5-amino-6-(D-ribitylamino)uracil = 6,7-dimethyl-8-(1-D-ribityl)lumazine + phosphate + 2 H2O + H(+). Its pathway is cofactor biosynthesis; riboflavin biosynthesis; riboflavin from 2-hydroxy-3-oxobutyl phosphate and 5-amino-6-(D-ribitylamino)uracil: step 1/2. In terms of biological role, catalyzes the formation of 6,7-dimethyl-8-ribityllumazine by condensation of 5-amino-6-(D-ribitylamino)uracil with 3,4-dihydroxy-2-butanone 4-phosphate. This is the penultimate step in the biosynthesis of riboflavin. In Clostridium perfringens (strain 13 / Type A), this protein is 6,7-dimethyl-8-ribityllumazine synthase.